Consider the following 485-residue polypeptide: N-succinylglutamate 5-semialdehyde dehydrogenase (485 aa).

220–225 (GSANTG) contributes to the NAD(+) binding site. Residues E243 and C278 contribute to the active site.

Belongs to the aldehyde dehydrogenase family. AstD subfamily.

It carries out the reaction N-succinyl-L-glutamate 5-semialdehyde + NAD(+) + H2O = N-succinyl-L-glutamate + NADH + 2 H(+). The protein operates within amino-acid degradation; L-arginine degradation via AST pathway; L-glutamate and succinate from L-arginine: step 4/5. In terms of biological role, catalyzes the NAD-dependent reduction of succinylglutamate semialdehyde into succinylglutamate. The protein is N-succinylglutamate 5-semialdehyde dehydrogenase of Vibrio parahaemolyticus serotype O3:K6 (strain RIMD 2210633).